A 162-amino-acid polypeptide reads, in one-letter code: D-aminoacyl-tRNA deacylase (162 aa).

Residues 145-146 (GP) carry the Gly-cisPro motif, important for rejection of L-amino acids motif.

Belongs to the DTD family. As to quaternary structure, homodimer.

Its subcellular location is the cytoplasm. It carries out the reaction glycyl-tRNA(Ala) + H2O = tRNA(Ala) + glycine + H(+). It catalyses the reaction a D-aminoacyl-tRNA + H2O = a tRNA + a D-alpha-amino acid + H(+). An aminoacyl-tRNA editing enzyme that deacylates mischarged D-aminoacyl-tRNAs. Also deacylates mischarged glycyl-tRNA(Ala), protecting cells against glycine mischarging by AlaRS. Acts via tRNA-based rather than protein-based catalysis; rejects L-amino acids rather than detecting D-amino acids in the active site. By recycling D-aminoacyl-tRNA to D-amino acids and free tRNA molecules, this enzyme counteracts the toxicity associated with the formation of D-aminoacyl-tRNA entities in vivo and helps enforce protein L-homochirality. This chain is D-aminoacyl-tRNA deacylase, found in Bifidobacterium longum (strain DJO10A).